The following is a 404-amino-acid chain: Sodium/glutamate symporter (404 aa).

The next 11 helical transmembrane spans lie at 5-25, 33-53, 69-89, 95-115, 161-181, 219-239, 245-265, 277-297, 307-327, 338-358, and 373-393; these read FSTYETLALASLVLLLGYFLV, TFNIPEPVVGGFIVAIGLLIW, TTMMLVFFTSIGLSANFSRLI, LVVFLFIAALLIFGQNVIGIA, IAIACATFGLVFGGIIGGPVA, SLIETIAMISVCLLIGQYLDV, ALQLPTFVWCLFTGVIVRNIL, AIDVLGSVGLSIFLAIALMSL, IDVLIVLAIQVAFMAAFAIFI, AVVLSAGHCGFGLGATPTAIA, and AFLIVPMVGAFFIDLINAALL.

This sequence belongs to the glutamate:Na(+) symporter (ESS) (TC 2.A.27) family.

The protein localises to the cell inner membrane. In terms of biological role, catalyzes the sodium-dependent transport of glutamate. This is Sodium/glutamate symporter from Haemophilus influenzae (strain ATCC 51907 / DSM 11121 / KW20 / Rd).